The following is a 402-amino-acid chain: Zinc finger protein 587B (402 aa).

In terms of domain architecture, KRAB spans 15-91 (VTFEDVAVKF…PVTGVSPKKA (77 aa)). A C2H2-type 1 zinc finger spans residues 92–114 (HPCEMCGPILGDILHVADHQGTH). The C2H2-type 2; degenerate zinc finger occupies 120 to 142 (HRCEAWGNKLYDSGNFHQHQNEH). Glycyl lysine isopeptide (Lys-Gly) (interchain with G-Cter in SUMO2) cross-links involve residues lysine 177, lysine 200, and lysine 253. C2H2-type zinc fingers lie at residues 242–264 (YVCC…QRVH), 270–292 (YECG…QQFH), 298–320 (YGCE…QKVH), 326–348 (YECG…QRIH), and 354–383 (YKCG…WVDH). Lysine 366 participates in a covalent cross-link: Glycyl lysine isopeptide (Lys-Gly) (interchain with G-Cter in SUMO2).

This sequence belongs to the krueppel C2H2-type zinc-finger protein family.

It is found in the nucleus. Its function is as follows. May be involved in transcriptional regulation. The polypeptide is Zinc finger protein 587B (ZNF587B) (Homo sapiens (Human)).